Consider the following 801-residue polypeptide: Sucrose synthase isoform 2 (801 aa).

The GT-B glycosyltransferase stretch occupies residues M271–T748.

The protein belongs to the glycosyltransferase 1 family. Plant sucrose synthase subfamily. In terms of assembly, homotetramer. In terms of tissue distribution, exclusively expressed in flowers.

It carries out the reaction an NDP-alpha-D-glucose + D-fructose = a ribonucleoside 5'-diphosphate + sucrose + H(+). Sucrose-cleaving enzyme that provides UDP-glucose and fructose for various metabolic pathways. This chain is Sucrose synthase isoform 2, found in Daucus carota (Wild carrot).